The primary structure comprises 1014 residues: EMILIN-1-A (1014 aa).

An N-terminal signal peptide occupies residues 1-27 (MALYFVYLSTLLALILLGDNWAAGTYA). The EMI domain occupies 53–128 (HRNWCAYVVT…HGYSGDDCSD (76 aa)). Intrachain disulfides connect Cys57–Cys118, Cys84–Cys89, and Cys117–Cys126. Disordered regions lie at residues 125–150 (DCSD…SDSD) and 811–869 (QDFT…ANVP). The segment covering 134–150 (HDSRARPTGEEGRSDSD) has biased composition (basic and acidic residues). Residues 145-179 (GRSDSDRIRQLEEQIQSLNKNLHNLQKKIYEESQR) are a coiled coil. Residues 815 to 865 (GPPGLPGPQGEKGSKGPPGPRGPLGKEGPQGRVGPVGPPGLRGEQGPPGKD) enclose the Collagen-like domain. Residues 840 to 856 (KEGPQGRVGPVGPPGLR) are compositionally biased toward low complexity. The C1q domain occupies 866–1012 (ANVPRLSFSA…GMLLYEESED (147 aa)).

It is found in the secreted. The protein resides in the extracellular space. Its subcellular location is the extracellular matrix. May be responsible for anchoring smooth muscle cells to elastic fibers, and may be involved not only in the formation of the elastic fiber, but also in the processes that regulate vessel assembly. Has cell adhesive capacity. The protein is EMILIN-1-A of Danio rerio (Zebrafish).